The primary structure comprises 204 residues: Cytochrome c biogenesis ATP-binding export protein CcmA (204 aa).

One can recognise an ABC transporter domain in the interval 3–204 (LTVTDLAIAR…PLDDPDGDFL (202 aa)). 35 to 42 (GPNGAGKT) is an ATP binding site.

Belongs to the ABC transporter superfamily. CcmA exporter (TC 3.A.1.107) family. In terms of assembly, the complex is composed of two ATP-binding proteins (CcmA) and two transmembrane proteins (CcmB).

The protein localises to the cell membrane. It catalyses the reaction heme b(in) + ATP + H2O = heme b(out) + ADP + phosphate + H(+). In terms of biological role, part of the ABC transporter complex CcmAB involved in the biogenesis of c-type cytochromes; once thought to export heme, this seems not to be the case, but its exact role is uncertain. Responsible for energy coupling to the transport system. The sequence is that of Cytochrome c biogenesis ATP-binding export protein CcmA from Ruegeria pomeroyi (strain ATCC 700808 / DSM 15171 / DSS-3) (Silicibacter pomeroyi).